Reading from the N-terminus, the 1406-residue chain is EF-hand calcium-binding domain-containing protein 5 (1406 aa).

The interval 255–655 (NKDLPQQQRD…KACEPKPQHV (401 aa)) is disordered. 8 stretches are compositionally biased toward polar residues: residues 258 to 294 (LPQQQRDQELSSDSTTEPETATQLTSQQRSRRVSLTG), 322 to 334 (RRSSGVNQTQQRG), 342 to 354 (RRSSAVEQTQQRG), 362 to 373 (RRSSTVEQTRQR), 382 to 393 (RRSSTVEQTQRR), 402 to 414 (RRSSGVNQTQQRG), 422 to 434 (RRSSAVEQTQQRG), and 442 to 464 (RRSSAMEQEPQTAQDPNSDSLPE). Positions 465-477 (QESHRGSITEGSH) are enriched in basic and acidic residues. Residues 501–513 (DDSGSAGSRRGSG) are compositionally biased toward low complexity. Acidic residues predominate over residues 564-577 (QELDEDSTPQLEDD). 2 stretches are compositionally biased toward basic and acidic residues: residues 578 to 598 (SALKESKTSELTKIETQEEKP) and 638 to 655 (SKRDSQKDKACEPKPQHV). An EF-hand domain is found at 773 to 808 (RRRILLQAIFEKWDNDGSGFLDLNEVDDLLYTYKEG). Residues D786, D788, S790, and E797 each contribute to the Ca(2+) site.

The sequence is that of EF-hand calcium-binding domain-containing protein 5 (Efcab5) from Mus musculus (Mouse).